Here is a 543-residue protein sequence, read N- to C-terminus: Intermediate filament protein ifb-2 (543 aa).

Positions 1–10 (MSAVSYSMHR) are enriched in polar residues. Residues 1-27 (MSAVSYSMHRTTTTTSSSSHGGVSAGH) are disordered. Residues 1-42 (MSAVSYSMHRTTTTTSSSSHGGVSAGHAAEEFVASAEREKQE) form a head region. The 350-residue stretch at 39-388 (EKQEMQQLNS…KLVESEEGRF (350 aa)) folds into the IF rod domain. The tract at residues 43–74 (MQQLNSRLEVYISRVRQLEDRNKELVIELDTL) is coil 1A. Residues 75-88 (RGSLGNDIGQIKFK) form a linker 1 region. The tract at residues 89 to 223 (FNDSLVKVRR…RIHSQEITEL (135 aa)) is coil 1B. Residues 224–240 (RTLLAQAPADTREFFKN) form a linker 12 region. The tract at residues 241–387 (ELALAIREIK…RKLVESEEGR (147 aa)) is coil 2. Positions 388-542 (FTHVGQGVVV…SHIQTTVASS (155 aa)) are tail. Residues 420 to 538 (TRSSFKRHAK…IEKASHIQTT (119 aa)) form the LTD domain.

This sequence belongs to the intermediate filament family. In terms of tissue distribution, expression is restricted to a discrete circumferential subapical layer within the intestinal terminal web (known as the 'endotube'); this layer joins directly to the apical junction complexes that connect adjacent gut cells.

The protein resides in the cytoplasm. Its function is as follows. Cytoplasmic intermediate filaments provide mechanical strength to cells. Not essential protein. Component of the terminal web (organelle-depleted, intermediate filament-rich layer of cytoplasm that underlies the apical microvilli of polarized epithelial cells) in embryonic through to adult gut cells. Correct localization of filaments requires let-413. This is Intermediate filament protein ifb-2 (ifb-2) from Caenorhabditis elegans.